The primary structure comprises 409 residues: LL-diaminopimelate aminotransferase (409 aa).

Residues Tyr15 and Gly42 each coordinate substrate. Residues Tyr72, 108–109, Tyr132, Asn186, Tyr217, and 245–247 each bind pyridoxal 5'-phosphate; these read AK and SFS. Substrate-binding residues include Lys109, Tyr132, and Asn186. Lys248 is modified (N6-(pyridoxal phosphate)lysine). The pyridoxal 5'-phosphate site is built by Arg256 and Asn291. Substrate-binding residues include Asn291 and Arg385.

This sequence belongs to the class-I pyridoxal-phosphate-dependent aminotransferase family. LL-diaminopimelate aminotransferase subfamily. In terms of assembly, homodimer. Pyridoxal 5'-phosphate serves as cofactor.

The enzyme catalyses (2S,6S)-2,6-diaminopimelate + 2-oxoglutarate = (S)-2,3,4,5-tetrahydrodipicolinate + L-glutamate + H2O + H(+). The protein operates within amino-acid biosynthesis; L-lysine biosynthesis via DAP pathway; LL-2,6-diaminopimelate from (S)-tetrahydrodipicolinate (aminotransferase route): step 1/1. Its function is as follows. Involved in the synthesis of meso-diaminopimelate (m-DAP or DL-DAP), required for both lysine and peptidoglycan biosynthesis. Catalyzes the direct conversion of tetrahydrodipicolinate to LL-diaminopimelate. This is LL-diaminopimelate aminotransferase from Desulfosudis oleivorans (strain DSM 6200 / JCM 39069 / Hxd3) (Desulfococcus oleovorans).